Consider the following 444-residue polypeptide: Alpha-N-acetylgalactosaminidase (444 aa).

NAD(+) is bound by residues 30–31 (LR), Asp52, Asn80, 101–104 (WEWH), His107, 121–122 (EV), and Asn150. Tyr179 serves as a coordination point for substrate. 208-212 (SEAKW) contributes to the NAD(+) binding site. Substrate contacts are provided by residues Arg213, 225-228 (YPTH), and Tyr307. Tyr225 is a binding site for NAD(+).

Belongs to the Gfo/Idh/MocA family. Glycosyl hydrolase 109 subfamily. The cofactor is NAD(+).

The enzyme catalyses Cleavage of non-reducing alpha-(1-&gt;3)-N-acetylgalactosamine residues from human blood group A and AB mucin glycoproteins, Forssman hapten and blood group A lacto series glycolipids.. Its function is as follows. Glycosidase that has specific alpha-N-acetylgalactosaminidase activity. The polypeptide is Alpha-N-acetylgalactosaminidase (nagA) (Elizabethkingia meningoseptica (Chryseobacterium meningosepticum)).